The following is a 20-amino-acid chain: Phosphoglycerate kinase (20 aa).

A disordered region spans residues 1–20 (MNKKSIRNVNLKGKRVFDRV).

Belongs to the phosphoglycerate kinase family. Monomer.

Its subcellular location is the cytoplasm. It carries out the reaction (2R)-3-phosphoglycerate + ATP = (2R)-3-phospho-glyceroyl phosphate + ADP. The protein operates within carbohydrate degradation; glycolysis; pyruvate from D-glyceraldehyde 3-phosphate: step 2/5. This chain is Phosphoglycerate kinase, found in Bacillus cereus.